The chain runs to 202 residues: Superoxide dismutase [Mn/Fe] (202 aa).

Fe(3+) is bound by residues histidine 27, histidine 81, aspartate 163, and histidine 167. Positions 27, 81, 163, and 167 each coordinate Mn(2+).

The protein belongs to the iron/manganese superoxide dismutase family. It depends on Mn(2+) as a cofactor. Fe(3+) serves as cofactor.

It catalyses the reaction 2 superoxide + 2 H(+) = H2O2 + O2. Destroys superoxide anion radicals which are normally produced within the cells and which are toxic to biological systems. Catalyzes the dismutation of superoxide anion radicals into O2 and H2O2 by successive reduction and oxidation of the transition metal ion at the active site. The protein is Superoxide dismutase [Mn/Fe] (sodA) of Streptococcus agalactiae serotype V (strain ATCC BAA-611 / 2603 V/R).